Here is a 406-residue protein sequence, read N- to C-terminus: Pyridinium-3,5-bisthiocarboxylic acid mononucleotide nickel insertion protein (406 aa).

It belongs to the LarC family.

The catalysed reaction is Ni(II)-pyridinium-3,5-bisthiocarboxylate mononucleotide = pyridinium-3,5-bisthiocarboxylate mononucleotide + Ni(2+). Functionally, involved in the biosynthesis of a nickel-pincer cofactor ((SCS)Ni(II) pincer complex). Binds Ni(2+), and functions in nickel delivery to pyridinium-3,5-bisthiocarboxylic acid mononucleotide (P2TMN), to form the mature cofactor. Is thus probably required for the activation of nickel-pincer cofactor-dependent enzymes. This Akkermansia muciniphila (strain ATCC BAA-835 / DSM 22959 / JCM 33894 / BCRC 81048 / CCUG 64013 / CIP 107961 / Muc) protein is Pyridinium-3,5-bisthiocarboxylic acid mononucleotide nickel insertion protein.